The following is a 515-amino-acid chain: Acetyltransferase sphE (515 aa).

Active-site proton acceptor residues include histidine 184 and aspartate 438.

The protein belongs to the plant acyltransferase family. In terms of assembly, monomer.

It carries out the reaction sphingofungin B + acetyl-CoA = sphingofungin C + CoA. The protein operates within secondary metabolite biosynthesis. Functionally, acetyltransferase; part of the gene cluster that mediates the biosynthesis of sphingofungins, bioactive molecules acting as sphingolipid inhibitors via inhibiting serine palmitoyl transferase (SPT). Within the pathway, sphE catalyzes the O-acetylation of the C-5 hydroxyl group of sphingofungin B to produce sphingofungin C. SphE can also convert sphingofungin B1 into sphingofungin C1 and sphingofungin B2 into sphingofungin C2. Sphingofungin biosynthesis starts with the PKS sphB that produces an C18 polyketide precursor 3-hydroxyoctadeca-4,10-dienoyl-ACP containing one delta-6 desaturation and one delta-12 desaturation. The aminoacyl transferase sphA uses the sphB product to produce 3-keto-presphingofungin by adding an aminomalonate molecule. SphF then reduces the C-3 ketone of 3-keto-presphingofungin which leads to presphingofungin. The cytochrome P450 monooxygenase sphH converts presphingofungin into sphingofungin B1 which is further converted to sphingofungin B by the dioxygenase sphC. SphC is also able to convert presphingofungin into sphingofungin B2. The acetyltransferase sphE acetylates sphingofungin B to produce sphingofungin C, but can also convert sphingofungin B1 into sphingofungin C1 and sphingofungin B2 into sphingofungin C2. Finally, sphingofungin C can be spontaneously converted into sphingofungin D. This is Acetyltransferase sphE from Aspergillus fumigatus (strain CBS 144.89 / FGSC A1163 / CEA10) (Neosartorya fumigata).